A 329-amino-acid polypeptide reads, in one-letter code: Glutamyl-tRNA reductase (329 aa).

Substrate is bound by residues 51–54 (TCLR), serine 99, 104–106 (EDQ), and glutamine 110. The active-site Nucleophile is the cysteine 52. NADP(+) is bound at residue 179–184 (GIGELA).

It belongs to the glutamyl-tRNA reductase family. As to quaternary structure, homodimer.

It carries out the reaction (S)-4-amino-5-oxopentanoate + tRNA(Glu) + NADP(+) = L-glutamyl-tRNA(Glu) + NADPH + H(+). Its pathway is porphyrin-containing compound metabolism; protoporphyrin-IX biosynthesis; 5-aminolevulinate from L-glutamyl-tRNA(Glu): step 1/2. In terms of biological role, catalyzes the NADPH-dependent reduction of glutamyl-tRNA(Glu) to glutamate 1-semialdehyde (GSA). The polypeptide is Glutamyl-tRNA reductase (Fusobacterium nucleatum subsp. nucleatum (strain ATCC 25586 / DSM 15643 / BCRC 10681 / CIP 101130 / JCM 8532 / KCTC 2640 / LMG 13131 / VPI 4355)).